Here is a 143-residue protein sequence, read N- to C-terminus: Large ribosomal subunit protein uL11 (143 aa).

This sequence belongs to the universal ribosomal protein uL11 family. In terms of assembly, part of the ribosomal stalk of the 50S ribosomal subunit. Interacts with L10 and the large rRNA to form the base of the stalk. L10 forms an elongated spine to which L12 dimers bind in a sequential fashion forming a multimeric L10(L12)X complex. Post-translationally, one or more lysine residues are methylated.

Its function is as follows. Forms part of the ribosomal stalk which helps the ribosome interact with GTP-bound translation factors. This is Large ribosomal subunit protein uL11 from Pseudomonas fluorescens (strain SBW25).